The chain runs to 329 residues: MKHFLTLNDFNRDEILAMVDVALELKYESLHIGNKPYLKGKVLAMIFEKSSTRTRVSFESGIFQLGGQGIFLSHKDIQLGRGEPIKDTARVISSMVDMIMMRTSEHSRLEEFASYSSVPVINGLSDDFHPVQLIADYLTMIECGIYLTHHNPLYPTKGKGGRNPIVAYIGDGNNMAHSWINLAGILGFELRIASPIGYAPKADIITKAQDMCIQSGGKIKILNDAKEAVSNANVVVTDTWASMGQEEQKEQRKCAFANFCVDEAMMSYAQKDAIFLHCLPAYRGQEVSEGVLEGAQSKVFQEAQNRLHAQKGIMLYLARINKIPLVSVE.

Carbamoyl phosphate-binding positions include 51 to 54, Gln78, Arg102, and 129 to 132; these read STRT and HPVQ. L-ornithine-binding positions include Asn174, Asp238, and 242–243; that span reads SM. Carbamoyl phosphate contacts are provided by residues 278–279 and Arg306; that span reads CL.

This sequence belongs to the aspartate/ornithine carbamoyltransferase superfamily. OTCase family.

The protein resides in the cytoplasm. The catalysed reaction is carbamoyl phosphate + L-ornithine = L-citrulline + phosphate + H(+). It functions in the pathway amino-acid biosynthesis; L-arginine biosynthesis; L-arginine from L-ornithine and carbamoyl phosphate: step 1/3. Reversibly catalyzes the transfer of the carbamoyl group from carbamoyl phosphate (CP) to the N(epsilon) atom of ornithine (ORN) to produce L-citrulline. The sequence is that of Ornithine carbamoyltransferase from Helicobacter hepaticus (strain ATCC 51449 / 3B1).